Reading from the N-terminus, the 137-residue chain is Cellular retinoic acid-binding protein 1 (137 aa).

The Nuclear localization signal motif lies at 21-31 (KALGVNAMLRK). 132 to 134 (RIY) lines the all-trans-retinoate pocket.

The protein belongs to the calycin superfamily. Fatty-acid binding protein (FABP) family.

Its subcellular location is the cytoplasm. Functionally, cytosolic CRABPs may regulate the access of retinoic acid to the nuclear retinoic acid receptors. This Hippocampus comes (Tiger tail seahorse) protein is Cellular retinoic acid-binding protein 1 (crabp1).